The primary structure comprises 93 residues: Small ribosomal subunit protein uS17 (93 aa).

It belongs to the universal ribosomal protein uS17 family. Part of the 30S ribosomal subunit.

Functionally, one of the primary rRNA binding proteins, it binds specifically to the 5'-end of 16S ribosomal RNA. In Rhodococcus erythropolis (strain PR4 / NBRC 100887), this protein is Small ribosomal subunit protein uS17.